A 345-amino-acid polypeptide reads, in one-letter code: Phosphoribosylformylglycinamidine cyclo-ligase (345 aa).

The protein belongs to the AIR synthase family.

The protein resides in the cytoplasm. The enzyme catalyses 2-formamido-N(1)-(5-O-phospho-beta-D-ribosyl)acetamidine + ATP = 5-amino-1-(5-phospho-beta-D-ribosyl)imidazole + ADP + phosphate + H(+). Its pathway is purine metabolism; IMP biosynthesis via de novo pathway; 5-amino-1-(5-phospho-D-ribosyl)imidazole from N(2)-formyl-N(1)-(5-phospho-D-ribosyl)glycinamide: step 2/2. The chain is Phosphoribosylformylglycinamidine cyclo-ligase from Histophilus somni (strain 2336) (Haemophilus somnus).